The sequence spans 482 residues: tRNA sulfurtransferase (482 aa).

Residues 61–165 enclose the THUMP domain; sequence DQILAILMQT…YDHLHQVLHR (105 aa). ATP-binding positions include 183-184, Lys265, Gly287, and Gln296; that span reads LI. Cys344 and Cys456 form a disulfide bridge. Residues 404–482 enclose the Rhodanese domain; it reads IGDGAIVLDI…GYGNIKVYRP (79 aa). The active-site Cysteine persulfide intermediate is Cys456.

It belongs to the ThiI family.

It localises to the cytoplasm. It catalyses the reaction [ThiI sulfur-carrier protein]-S-sulfanyl-L-cysteine + a uridine in tRNA + 2 reduced [2Fe-2S]-[ferredoxin] + ATP + H(+) = [ThiI sulfur-carrier protein]-L-cysteine + a 4-thiouridine in tRNA + 2 oxidized [2Fe-2S]-[ferredoxin] + AMP + diphosphate. The enzyme catalyses [ThiS sulfur-carrier protein]-C-terminal Gly-Gly-AMP + S-sulfanyl-L-cysteinyl-[cysteine desulfurase] + AH2 = [ThiS sulfur-carrier protein]-C-terminal-Gly-aminoethanethioate + L-cysteinyl-[cysteine desulfurase] + A + AMP + 2 H(+). The protein operates within cofactor biosynthesis; thiamine diphosphate biosynthesis. Functionally, catalyzes the ATP-dependent transfer of a sulfur to tRNA to produce 4-thiouridine in position 8 of tRNAs, which functions as a near-UV photosensor. Also catalyzes the transfer of sulfur to the sulfur carrier protein ThiS, forming ThiS-thiocarboxylate. This is a step in the synthesis of thiazole, in the thiamine biosynthesis pathway. The sulfur is donated as persulfide by IscS. This Photobacterium profundum (strain SS9) protein is tRNA sulfurtransferase.